The sequence spans 225 residues: Platelet-activating factor acetylhydrolase IB subunit beta homolog (225 aa).

The protein belongs to the 'GDSL' lipolytic enzyme family. Platelet-activating factor acetylhydrolase IB beta/gamma subunits subfamily. As to quaternary structure, does not interact with Lis-1.

In Drosophila melanogaster (Fruit fly), this protein is Platelet-activating factor acetylhydrolase IB subunit beta homolog (Paf-AHalpha).